We begin with the raw amino-acid sequence, 230 residues long: CDP-diacylglycerol--inositol 3-phosphatidyltransferase (230 aa).

The Cytoplasmic portion of the chain corresponds to 1-28 (MPSAKSSDLSPTKTNLESTTKQKVSVQD). Residues 29 to 51 (IFLYIPNLIGYLRIITAIISFLC) traverse the membrane as a helical segment. The Lumenal segment spans residues 52-57 (MANHPV). Residues 58 to 77 (ATLIFYGISGFLDAFDGYAA) form a helical membrane-spanning segment. Residues Asp70 and Asp73 each coordinate Mg(2+). A CDP-1,2-diacyl-sn-glycerol contacts are provided by Gly74, Arg78, and Thr84. Over 78–89 (RKFNQGTRFGAV) the chain is Cytoplasmic. The helical transmembrane segment at 90 to 110 (LDMVTDRCATSSLIVYLGVLY) threads the bilayer. Residues Asp91 and Asp95 each coordinate Mg(2+). Residue Asp95 is the Proton acceptor of the active site. At 111 to 112 (PQ) the chain is on the lumenal side. The chain crosses the membrane as a helical span at residues 113 to 133 (YTVFWQILVSLDLSSHYMHMY). Topologically, residues 134 to 161 (AMLSAGSTSHKNVDETQSKLLSLYYNNR) are cytoplasmic. Residues 162 to 182 (LVLFFVCLINELFYMAVYLHY) traverse the membrane as a helical segment. Over 183–184 (YK) the chain is Lumenal. A helical membrane pass occupies residues 185 to 205 (FFWLGTVMLVASTPIWLFKQI). The Cytoplasmic segment spans residues 206–230 (ANIIQLKNASLILARMDAHDHSKRD).

This sequence belongs to the CDP-alcohol phosphatidyltransferase class-I family. It depends on Mn(2+) as a cofactor. Requires Mg(2+) as cofactor.

Its subcellular location is the endoplasmic reticulum membrane. It catalyses the reaction a CDP-1,2-diacyl-sn-glycerol + myo-inositol = a 1,2-diacyl-sn-glycero-3-phospho-(1D-myo-inositol) + CMP + H(+). With respect to regulation, inhibited by calcium and zinc ions. Inhibited by nucleoside triphosphates and diphosphates. In terms of biological role, catalyzes the synthesis of phosphatidylinositol (PtdIns). Required for proper membrane dynamics and cell wall integrity. This Candida albicans (strain SC5314 / ATCC MYA-2876) (Yeast) protein is CDP-diacylglycerol--inositol 3-phosphatidyltransferase.